Consider the following 638-residue polypeptide: Chaperone protein DnaK (638 aa).

Thr200 carries the post-translational modification Phosphothreonine; by autocatalysis. The interval 598 to 621 (SLHMAATAEQQSGSTGAGAGASAK) is disordered.

Belongs to the heat shock protein 70 family.

Its function is as follows. Acts as a chaperone. This chain is Chaperone protein DnaK, found in Xylella fastidiosa (strain M23).